An 836-amino-acid polypeptide reads, in one-letter code: MIAELVSSALGLALYLNTLSADFCYDDSRAIKTNQDLLPETPWTHIFYNDFWGTLLTHSGSHKSYRPLCTLSFRLNHAIGGLNPWSYHLVNVLLHAAVTGLFTRFSKALLGDGYWTFMAGLMFASHPIHTEAVAGIVGRADVGASLFFLLSLLCYIKHCSTRGYSARTWGWFLGTGLCAGCSMLWKEQGVTVLAVSAVYDVFVFHRLKMKQILPTIYKRKNLSLFLSISLLTFWGTCLLGARLYWMGNKPPSFSNSDNPAADSDSLLARTLTFLYLPTKNLWLLLCPDTLSFDWSMDAVPLLKTVCDWRNLHTVAFYSGLLLLAYCGLKNPSLEGECNGKALTNGKQNANGHSCHSDVEYRNSEMKPSFASKVENGIKNCVPQRTQLPSTENIVILSLSLLIIPFIPATNLFFYVGFVIAERVLYIPSMGFCLLITVGARALYVKVQKRFLKSLVFYATATLIVFYGVKTAIRNGDWQNEEMLYRSGIKVNPAKAWGNLGNVLKSQSKISEAESAYRNALFYRSNMADMLYNLGLLLQENSRFAEALHYYKLAIGSRPTLASAYLNTGIILMNQGKTEEARRTFLKCSEIPDENLKDPHAHKSSVTSCLYNLGKLYHEQGRYEEALSVYREAIQKMPRHFAPQSLYNMMGEAYMRLSKLPEAEHWYMESLRSKTDHIPAHLTYGKLLALTGRKSEAEKFFLKAIELDPTKGNCYMHYGQFLLEESRLTEAAEMAKKAAELDNTEFDVVFNAAHMLRQASLNEAAEKYYDLAARLRPNYPAALMNLGAILHLNGRLQKAEANYLRALQLKPDDVITQSNLRKLWNIMEKQGLKTSKT.

Residues 1-21 (MIAELVSSALGLALYLNTLSA) form a helical membrane-spanning segment. At 22 to 77 (DFCYDDSRAIKTNQDLLPETPWTHIFYNDFWGTLLTHSGSHKSYRPLCTLSFRLNH) the chain is on the extracellular side. The helical transmembrane segment at 78–98 (AIGGLNPWSYHLVNVLLHAAV) threads the bilayer. Over 99 to 107 (TGLFTRFSK) the chain is Cytoplasmic. Residues 108–128 (ALLGDGYWTFMAGLMFASHPI) traverse the membrane as a helical segment. Residues 129–132 (HTEA) lie on the Extracellular side of the membrane. A helical transmembrane segment spans residues 133 to 153 (VAGIVGRADVGASLFFLLSLL). Topologically, residues 154–168 (CYIKHCSTRGYSART) are cytoplasmic. 2 helical membrane-spanning segments follow: residues 169-184 (WGWFLGTGLCAGCSML) and 185-204 (WKEQGVTVLAVSAVYDVFVF). At 205-220 (HRLKMKQILPTIYKRK) the chain is on the cytoplasmic side. Residues 221 to 241 (NLSLFLSISLLTFWGTCLLGA) form a helical membrane-spanning segment. At 242-312 (RLYWMGNKPP…KTVCDWRNLH (71 aa)) the chain is on the extracellular side. A helical membrane pass occupies residues 313–333 (TVAFYSGLLLLAYCGLKNPSL). At 334-392 (EGECNGKALTNGKQNANGHSCHSDVEYRNSEMKPSFASKVENGIKNCVPQRTQLPSTEN) the chain is on the cytoplasmic side. The chain crosses the membrane as a helical span at residues 393–415 (IVILSLSLLIIPFIPATNLFFYV). Residues 416–422 (GFVIAER) are Extracellular-facing. Residues 423–443 (VLYIPSMGFCLLITVGARALY) form a helical membrane-spanning segment. At 444 to 449 (VKVQKR) the chain is on the cytoplasmic side. A helical membrane pass occupies residues 450–470 (FLKSLVFYATATLIVFYGVKT). The Extracellular segment spans residues 471–836 (AIRNGDWQNE…EKQGLKTSKT (366 aa)). 9 TPR repeats span residues 493–526 (AKAWGNLGNVLKSQSKISEAESAYRNALFYRSNM), 527–560 (ADMLYNLGLLLQENSRFAEALHYYKLAIGSRPTL), 561–594 (ASAYLNTGIILMNQGKTEEARRTFLKCSEIPDEN), 606–639 (TSCLYNLGKLYHEQGRYEEALSVYREAIQKMPRH), 643–676 (QSLYNMMGEAYMRLSKLPEAEHWYMESLRSKTDH), 677–710 (IPAHLTYGKLLALTGRKSEAEKFFLKAIELDPTK), 711–744 (GNCYMHYGQFLLEESRLTEAAEMAKKAAELDNTE), 745–778 (FDVVFNAAHMLRQASLNEAAEKYYDLAARLRPNY), and 779–812 (PAALMNLGAILHLNGRLQKAEANYLRALQLKPDD).

It belongs to the TMTC family.

It is found in the membrane. The protein localises to the endoplasmic reticulum. The enzyme catalyses a di-trans,poly-cis-dolichyl beta-D-mannosyl phosphate + L-seryl-[protein] = 3-O-(alpha-D-mannosyl)-L-seryl-[protein] + a di-trans,poly-cis-dolichyl phosphate + H(+). It catalyses the reaction a di-trans,poly-cis-dolichyl beta-D-mannosyl phosphate + L-threonyl-[protein] = 3-O-(alpha-D-mannosyl)-L-threonyl-[protein] + a di-trans,poly-cis-dolichyl phosphate + H(+). Its pathway is protein modification; protein glycosylation. Functionally, transfers mannosyl residues to the hydroxyl group of serine or threonine residues. The 4 members of the TMTC family are O-mannosyl-transferases dedicated primarily to the cadherin superfamily, each member seems to have a distinct role in decorating the cadherin domains with O-linked mannose glycans at specific regions. Also acts as O-mannosyl-transferase on other proteins such as PDIA3. In Mus musculus (Mouse), this protein is Protein O-mannosyl-transferase TMTC2.